The following is a 361-amino-acid chain: Ribosomal RNA large subunit methyltransferase M (361 aa).

Residues Ser187, 220–223 (CPGG), Asp239, Asp259, and Asp276 each bind S-adenosyl-L-methionine. The active-site Proton acceptor is the Lys305.

This sequence belongs to the class I-like SAM-binding methyltransferase superfamily. RNA methyltransferase RlmE family. RlmM subfamily. Monomer.

Its subcellular location is the cytoplasm. It catalyses the reaction cytidine(2498) in 23S rRNA + S-adenosyl-L-methionine = 2'-O-methylcytidine(2498) in 23S rRNA + S-adenosyl-L-homocysteine + H(+). Functionally, catalyzes the 2'-O-methylation at nucleotide C2498 in 23S rRNA. This chain is Ribosomal RNA large subunit methyltransferase M, found in Shewanella baltica (strain OS185).